Reading from the N-terminus, the 274-residue chain is MLSVAARSGPFAPVLSATSRGVAXXXXXXXXXXXXXTPQPPVLDPKRPILSRESLSGQAARRPLVATVGLNVPASVRYSHTDIKVPDFSDYRRSEVLDTTKSSRESSDARKGFSYLVTATTAVGVTYAAKSIVTQFVSSMSASADVLAMSKIEIKLSDIPEGKNMAFKWRGKPLFVRHRTQKEIEQEAAVELSQLRDPQHDLDRVKKPEWMILIGVCTHLGCVPIANAGDFGGYYCPCHGSHYDASGRIRKGPAPLNLEVPTYEFTSDDLVIVG.

Residues 79–103 (SHTDIKVPDFSDYRRSEVLDTTKSS) are Mitochondrial matrix-facing. A helical membrane pass occupies residues 104 to 140 (RESSDARKGFSYLVTATTAVGVTYAAKSIVTQFVSSM). Residues 141–274 (SASADVLAMS…FTSDDLVIVG (134 aa)) lie on the Mitochondrial intermembrane side of the membrane. One can recognise a Rieske domain in the interval 187 to 272 (EAAVELSQLR…YEFTSDDLVI (86 aa)). Residues Cys-217, His-219, Cys-236, His-239, and Ser-241 each contribute to the [2Fe-2S] cluster site. A disulfide bond links Cys-222 and Cys-238.

Belongs to the Rieske iron-sulfur protein family. Component of the ubiquinol-cytochrome c oxidoreductase (cytochrome b-c1 complex, complex III, CIII), a multisubunit enzyme composed of 11 subunits. The complex is composed of 3 respiratory subunits cytochrome b, cytochrome c1 and Rieske protein UQCRFS1, 2 core protein subunits UQCRC1/QCR1 and UQCRC2/QCR2, and 6 low-molecular weight protein subunits UQCRH/QCR6, UQCRB/QCR7, UQCRQ/QCR8, UQCR10/QCR9, UQCR11/QCR10 and subunit 9, the cleavage product of Rieske protein UQCRFS1. The complex exists as an obligatory dimer and forms supercomplexes (SCs) in the inner mitochondrial membrane with NADH-ubiquinone oxidoreductase (complex I, CI) and cytochrome c oxidase (complex IV, CIV), resulting in different assemblies (supercomplex SCI(1)III(2)IV(1) and megacomplex MCI(2)III(2)IV(2)). Incorporation of the Rieske protein UQCRFS1 is the penultimate step in complex III assembly. Interacts with TTC19, which is involved in the clearance of UQCRFS1 fragments. In terms of assembly, component of the ubiquinol-cytochrome c oxidoreductase (cytochrome b-c1 complex, complex III, CIII). Subunit 9 corresponds to the mitochondrial targeting sequence (MTS) of Rieske protein UQCRFS1. It is retained after processing and incorporated inside complex III, where it remains bound to the complex and localizes between the 2 core subunits UQCRC1/QCR1 and UQCRC2/QCR2. [2Fe-2S] cluster serves as cofactor. Proteolytic processing is necessary for the correct insertion of UQCRFS1 in the complex III dimer. Several fragments are generated during UQCRFS1 insertion, most probably due to the endogenous matrix-processing peptidase (MPP) activity of the 2 core protein subunits UQCRC1/QCR1 and UQCRC2/QCR2, which are homologous to the 2 mitochondrial-processing peptidase (MPP) subunits beta-MPP and alpha-MPP respectively. The action of the protease is also necessary for the clearance of the UQCRFS1 fragments.

It localises to the mitochondrion inner membrane. It carries out the reaction a quinol + 2 Fe(III)-[cytochrome c](out) = a quinone + 2 Fe(II)-[cytochrome c](out) + 2 H(+)(out). Functionally, component of the ubiquinol-cytochrome c oxidoreductase, a multisubunit transmembrane complex that is part of the mitochondrial electron transport chain which drives oxidative phosphorylation. The respiratory chain contains 3 multisubunit complexes succinate dehydrogenase (complex II, CII), ubiquinol-cytochrome c oxidoreductase (cytochrome b-c1 complex, complex III, CIII) and cytochrome c oxidase (complex IV, CIV), that cooperate to transfer electrons derived from NADH and succinate to molecular oxygen, creating an electrochemical gradient over the inner membrane that drives transmembrane transport and the ATP synthase. The cytochrome b-c1 complex catalyzes electron transfer from ubiquinol to cytochrome c, linking this redox reaction to translocation of protons across the mitochondrial inner membrane, with protons being carried across the membrane as hydrogens on the quinol. In the process called Q cycle, 2 protons are consumed from the matrix, 4 protons are released into the intermembrane space and 2 electrons are passed to cytochrome c. The Rieske protein is a catalytic core subunit containing a [2Fe-2S] iron-sulfur cluster. It cycles between 2 conformational states during catalysis to transfer electrons from the quinol bound in the Q(0) site in cytochrome b to cytochrome c1. Incorporation of UQCRFS1 is the penultimate step in complex III assembly. Component of the ubiquinol-cytochrome c oxidoreductase (cytochrome b-c1 complex, complex III, CIII). UQCRFS1 undergoes proteolytic processing once it is incorporated in the complex III dimer. One of the fragments, called subunit 9, corresponds to its mitochondrial targeting sequence (MTS). The proteolytic processing is necessary for the correct insertion of UQCRFS1 in the complex III dimer, but the persistence of UQCRFS1-derived fragments may prevent newly imported UQCRFS1 to be processed and assembled into complex III and is detrimental for the complex III structure and function. The chain is Cytochrome b-c1 complex subunit Rieske, mitochondrial (UQCRFS1) from Aotus azarae (Azara's night monkey).